Reading from the N-terminus, the 348-residue chain is MTAPSQVLKIRRPDDWHLHLRDGDMLKTVVPYSSEIYARAIVMPNLAPPVTTVDAAIAYRQRILAAVPAGHNFTPLMTCYLTDSLDPDELERGFQQGVFTAAKLYPANATTNSSHGVTSTAAIMPVLERMEKIGMPLLVHGEVTHADIDIFDREARFIDTVMEPLRKQLPGLKVVFEHITTKDAADYVREGNDQLAATITPQHLMFNRNHMLVGGIRPHLYCLPILKRNVHQQALRELVASGFERVFLGTDSAPHARHRKEASCGCAGCFNAPTALGSYATVFEEMNALQHLEAFCSLNGPKFYGLPVNDSFIELERRESQVPDNIALNDDSLIPFLAGETIHWSVKK.

The Zn(2+) site is built by His-17 and His-19. Substrate-binding positions include His-19–Arg-21 and Asn-45. 3 residues coordinate Zn(2+): Lys-103, His-140, and His-178. Position 103 is an N6-carboxylysine (Lys-103). A substrate-binding site is contributed by His-140. Leu-223 is a binding site for substrate. Residue Asp-251 participates in Zn(2+) binding. The active site involves Asp-251. Residues His-255 and Ala-267 each coordinate substrate.

It belongs to the metallo-dependent hydrolases superfamily. DHOase family. Class II DHOase subfamily. In terms of assembly, homodimer. Zn(2+) serves as cofactor.

It catalyses the reaction (S)-dihydroorotate + H2O = N-carbamoyl-L-aspartate + H(+). The protein operates within pyrimidine metabolism; UMP biosynthesis via de novo pathway; (S)-dihydroorotate from bicarbonate: step 3/3. Catalyzes the reversible cyclization of carbamoyl aspartate to dihydroorotate. In Escherichia fergusonii (strain ATCC 35469 / DSM 13698 / CCUG 18766 / IAM 14443 / JCM 21226 / LMG 7866 / NBRC 102419 / NCTC 12128 / CDC 0568-73), this protein is Dihydroorotase.